A 232-amino-acid polypeptide reads, in one-letter code: Small ribosomal subunit protein uS3 (232 aa).

Residues 39–107 (VRQFLTKELQ…PAQINIAEVR (69 aa)) form the KH type-2 domain. Positions 213 to 232 (AANAVEPKGDKPKKQRKGRK) are disordered.

Belongs to the universal ribosomal protein uS3 family. In terms of assembly, part of the 30S ribosomal subunit. Forms a tight complex with proteins S10 and S14.

Its function is as follows. Binds the lower part of the 30S subunit head. Binds mRNA in the 70S ribosome, positioning it for translation. In Vibrio campbellii (strain ATCC BAA-1116), this protein is Small ribosomal subunit protein uS3.